Here is a 98-residue protein sequence, read N- to C-terminus: NADH-ubiquinone oxidoreductase chain 4L (98 aa).

A run of 3 helical transmembrane segments spans residues 1 to 21, 29 to 49, and 61 to 81; these read MPII…GMLV, SLLC…LMAL, and IALL…LVSI.

This sequence belongs to the complex I subunit 4L family. Core subunit of respiratory chain NADH dehydrogenase (Complex I) which is composed of 45 different subunits.

Its subcellular location is the mitochondrion inner membrane. It carries out the reaction a ubiquinone + NADH + 5 H(+)(in) = a ubiquinol + NAD(+) + 4 H(+)(out). Core subunit of the mitochondrial membrane respiratory chain NADH dehydrogenase (Complex I) which catalyzes electron transfer from NADH through the respiratory chain, using ubiquinone as an electron acceptor. Part of the enzyme membrane arm which is embedded in the lipid bilayer and involved in proton translocation. This chain is NADH-ubiquinone oxidoreductase chain 4L (MT-ND4L), found in Piliocolobus badius (Western red colobus).